A 159-amino-acid chain; its full sequence is Ribosomal RNA large subunit methyltransferase H (159 aa).

S-adenosyl-L-methionine is bound by residues Leu76, Gly108, and 127–132 (FGLLTL).

The protein belongs to the RNA methyltransferase RlmH family. In terms of assembly, homodimer.

It localises to the cytoplasm. The catalysed reaction is pseudouridine(1915) in 23S rRNA + S-adenosyl-L-methionine = N(3)-methylpseudouridine(1915) in 23S rRNA + S-adenosyl-L-homocysteine + H(+). In terms of biological role, specifically methylates the pseudouridine at position 1915 (m3Psi1915) in 23S rRNA. The polypeptide is Ribosomal RNA large subunit methyltransferase H (Leuconostoc mesenteroides subsp. mesenteroides (strain ATCC 8293 / DSM 20343 / BCRC 11652 / CCM 1803 / JCM 6124 / NCDO 523 / NBRC 100496 / NCIMB 8023 / NCTC 12954 / NRRL B-1118 / 37Y)).